The sequence spans 507 residues: Glucose-6-phosphate isomerase (507 aa).

The active-site Proton donor is the E338. Catalysis depends on residues H369 and K479.

Belongs to the GPI family.

Its subcellular location is the cytoplasm. The enzyme catalyses alpha-D-glucose 6-phosphate = beta-D-fructose 6-phosphate. It participates in carbohydrate biosynthesis; gluconeogenesis. It functions in the pathway carbohydrate degradation; glycolysis; D-glyceraldehyde 3-phosphate and glycerone phosphate from D-glucose: step 2/4. Its function is as follows. Provides a gateway for fructose into the Entner-Doudouroff pathway. Catalyzes the reversible isomerization of glucose-6-phosphate to fructose-6-phosphate. This is Glucose-6-phosphate isomerase from Zymomonas mobilis subsp. mobilis (strain ATCC 31821 / ZM4 / CP4).